The following is a 162-amino-acid chain: Nascent polypeptide-associated complex subunit beta (162 aa).

Disordered regions lie at residues 1 to 39 (MPVD…NISE) and 130 to 162 (EQAK…DNVE). Over residues 24 to 33 (TPRRPGKKVA) the composition is skewed to basic residues. Residues 38-103 (SEDEKKLSAT…SQQKDIAELI (66 aa)) form the NAC-A/B domain. Residues 146-162 (GDDEIPNLVENFEDNVE) show a composition bias toward acidic residues.

The protein belongs to the NAC-beta family. Part of the nascent polypeptide-associated complex (NAC), consisting of EGD2 and EGD1. NAC associates with ribosomes via EGD1.

The protein localises to the cytoplasm. Its subcellular location is the nucleus. Component of the nascent polypeptide-associated complex (NAC), a dynamic component of the ribosomal exit tunnel, protecting the emerging polypeptides from interaction with other cytoplasmic proteins to ensure appropriate nascent protein targeting. The NAC complex also promotes mitochondrial protein import by enhancing productive ribosome interactions with the outer mitochondrial membrane and blocks the inappropriate interaction of ribosomes translating non-secretory nascent polypeptides with translocation sites in the membrane of the endoplasmic reticulum. EGD1 may act as a transcription factor that exert a negative effect on the expression of several genes that are transcribed by RNA polymerase II. This chain is Nascent polypeptide-associated complex subunit beta (EGD1), found in Yarrowia lipolytica (strain CLIB 122 / E 150) (Yeast).